Reading from the N-terminus, the 498-residue chain is Glycerol kinase (498 aa).

ADP is bound at residue Thr-13. 3 residues coordinate ATP: Thr-13, Thr-14, and Ser-15. Thr-13 is a sn-glycerol 3-phosphate binding site. Arg-17 lines the ADP pocket. Residues Arg-83, Glu-84, Tyr-135, and Asp-244 each coordinate sn-glycerol 3-phosphate. Arg-83, Glu-84, Tyr-135, Asp-244, and Gln-245 together coordinate glycerol. ADP contacts are provided by Thr-266 and Gly-309. ATP-binding residues include Thr-266, Gly-309, Gln-313, and Gly-410. ADP is bound by residues Gly-410 and Asn-414.

It belongs to the FGGY kinase family.

The enzyme catalyses glycerol + ATP = sn-glycerol 3-phosphate + ADP + H(+). It participates in polyol metabolism; glycerol degradation via glycerol kinase pathway; sn-glycerol 3-phosphate from glycerol: step 1/1. With respect to regulation, inhibited by fructose 1,6-bisphosphate (FBP). In terms of biological role, key enzyme in the regulation of glycerol uptake and metabolism. Catalyzes the phosphorylation of glycerol to yield sn-glycerol 3-phosphate. This chain is Glycerol kinase, found in Koribacter versatilis (strain Ellin345).